A 118-amino-acid polypeptide reads, in one-letter code: DNA mimic protein DMP12 (118 aa).

This sequence belongs to the DMP12-like protein family. As to quaternary structure, monomer. Interacts with the dimeric form of the DNA-binding protein HU.

Functionally, acts as a DNA mimic. Interacts with the DNA-binding protein HU and partially prevents the binding of HU protein to DNA by occupying the DNA binding sites on the protein. However, the relatively weak affinity of DMP12 for HU suggests that it may not completely block the HU protein-DNA binding, and that DMP12 is more likely to act as a regulator than a competitive inhibitor. It protects HU protein from limited digestion by trypsin in a limited trypsin digestion assay, suggesting that it may serve to protect the HU protein and improve the stability of unbound HU protein. This chain is DNA mimic protein DMP12, found in Neisseria meningitidis serogroup B (strain ATCC BAA-335 / MC58).